A 277-amino-acid chain; its full sequence is Diaminopimelate epimerase (277 aa).

2 residues coordinate substrate: Asn11 and Asn62. Cys71 acts as the Proton donor in catalysis. Residues 72-73 (GN), Asn160, Asn193, and 211-212 (ER) contribute to the substrate site. Cys220 (proton acceptor) is an active-site residue. A substrate-binding site is contributed by 221–222 (GT).

Belongs to the diaminopimelate epimerase family. Homodimer.

It localises to the cytoplasm. The enzyme catalyses (2S,6S)-2,6-diaminopimelate = meso-2,6-diaminopimelate. It participates in amino-acid biosynthesis; L-lysine biosynthesis via DAP pathway; DL-2,6-diaminopimelate from LL-2,6-diaminopimelate: step 1/1. Functionally, catalyzes the stereoinversion of LL-2,6-diaminopimelate (L,L-DAP) to meso-diaminopimelate (meso-DAP), a precursor of L-lysine. The polypeptide is Diaminopimelate epimerase (Methanococcus maripaludis (strain C6 / ATCC BAA-1332)).